Here is a 186-residue protein sequence, read N- to C-terminus: Napin embryo-specific (186 aa).

A signal peptide spans 1–21 (MANKLFLVSATLALFFLLTNA). 2 propeptides span residues 22–38 (SVYR…ATNP) and 77–97 (PSWT…QQQG).

The protein belongs to the 2S seed storage albumins family. As to quaternary structure, the mature protein consists of a small and a large chain linked by disulfide bonds. In terms of tissue distribution, cotyledons and the axis.

Functionally, the small, basic, water-soluble napins are one of the two major kinds of storage proteins synthesized in the seed during its maturation. This chain is Napin embryo-specific, found in Brassica napus (Rape).